Consider the following 372-residue polypeptide: Citrate/2-methylcitrate synthase (372 aa).

A substrate-binding site is contributed by histidine 188. The active site involves histidine 223. A CoA-binding site is contributed by 256-260 (KIMGF). Residue histidine 262 is part of the active site. Position 272 (arginine 272) interacts with substrate. Aspartate 314 is a catalytic residue. 2 residues coordinate substrate: arginine 339 and arginine 358.

Belongs to the citrate synthase family.

It carries out the reaction propanoyl-CoA + oxaloacetate + H2O = 2-methylcitrate + CoA + H(+). The catalysed reaction is oxaloacetate + acetyl-CoA + H2O = citrate + CoA + H(+). It participates in carbohydrate metabolism; tricarboxylic acid cycle; isocitrate from oxaloacetate: step 1/2. In terms of biological role, involved in both the tricarboxylic acid (TCA) and methylcitric acid cycles. Has both 2-methylcitrate synthase and citrate synthase activities. Catalyzes the condensation of propionyl-CoA and oxaloacetate to yield 2-methylcitrate (2-MC) and CoA, and the condensation of acetyl-CoA and oxaloacetate to yield citrate and CoA. Has 2.3-fold higher activity as a 2-methylcitrate synthase. Catalyzes the formation of either (2S,3R)- or (2R,3S)-2-methylcitrate. This Bacillus subtilis (strain 168) protein is Citrate/2-methylcitrate synthase.